The following is a 630-amino-acid chain: Neuronal acetylcholine receptor subunit alpha-4 (630 aa).

Positions 1–30 are cleaved as a signal peptide; that stretch reads MANSGTGAPPPLLLLPLLLLLGTGLLPASS. The Extracellular segment spans residues 32 to 249; it reads IETRAHAEER…IIRRLPLFYT (218 aa). N59 carries N-linked (GlcNAc...) asparagine glycosylation. Positions 78 and 80 each coordinate Ca(2+). N-linked (GlcNAc...) asparagine glycosylation is found at N109 and N176. 2 cysteine pairs are disulfide-bonded: C163/C177 and C227/C228. The chain crosses the membrane as a helical span at residues 250–270; it reads INLIIPCLLISCLTVLVFYLP. C273 carries S-palmitoyl cysteine lipidation. 2 consecutive transmembrane segments (helical) span residues 279–299 and 313–333; these read LCISVLLSLTVFLLLITEIIP and LLFTMIFVTLSIVITVFVLNV. Residues 334-604 lie on the Cytoplasmic side of the membrane; the sequence is HHRSPRTHTM…WKYVAMVIDR (271 aa). Disordered stretches follow at residues 418–463 and 505–526; these read TAVE…SGAP and SLADSKPTSSPTSLKARPSQLP. S428 carries the post-translational modification Phosphoserine. The segment covering 434–443 has biased composition (basic and acidic residues); that stretch reads PDLKTSEVEK. The segment covering 447 to 457 has biased composition (pro residues); that stretch reads CPSPGSCPPPK. 2 positions are modified to phosphoserine: S542 and S545. The chain crosses the membrane as a helical span at residues 605–625; that stretch reads IFLWMFIIVCLLGTVGLFLPP.

The protein belongs to the ligand-gated ion channel (TC 1.A.9) family. Acetylcholine receptor (TC 1.A.9.1) subfamily. Alpha-4/CHRNA4 sub-subfamily. Neuronal AChR is composed of two different types of subunits: alpha and beta. CHRNA4 forms heteropentameric neuronal acetylcholine receptors with CHRNB2 and CHRNB4, as well as CHRNA5 and CHRNB3 as accesory subunits. Found in two major stoichiometric forms, LS (low agonist sensitivity): (CHRNA4)3:(CHRNB2)2 and HS (high agonist sensitivity): (CHRNA4)2:(CHRNB2)3, the two stoichiometric forms differ in their unitary conductance, calcium permeability, ACh sensitivity and potentiation by divalent cation. Cells produce predominantly an (CHRNA4)3:(CHRNB2)2 nAChR. The (CHRNA4)2:(CHRNB2)3 expression is selectively up-regulated by nicotine and has lower single channel conductance and calcium permeability. In the striatum, also forms CHRNA4:CHRNA6:CHRNB2 complexes. Also found in the stoichiometric form: (CHRNA4:CHRNB2)2:CHRNB3. Interacts with RIC3; which is required for proper folding and assembly. Interacts with LYPD6. As to expression, in various regions of the central nervous system. Expressed in hippocampal neurons.

Its subcellular location is the presynaptic cell membrane. It localises to the cell membrane. It catalyses the reaction Ca(2+)(in) = Ca(2+)(out). It carries out the reaction K(+)(in) = K(+)(out). The catalysed reaction is Na(+)(in) = Na(+)(out). Activated by a myriad of ligands such as acetylcholine, cytisine, nicotine, choline and epibatidine. Channel potentiation by calcium is stoichiometry-selective, CHRNA4:CHRNB2 nACh receptor is achieved by calcium association with topographically distinct sites framed by anionic residues within the CHRNA4 subunit and between the CHRNA4 and CHRNB2 subunits. nAChR activity is inhibited by the antagonist alpha-conotoxins BuIA, PnIA, GID and MII, small disulfide-constrained peptides from cone snails. Its function is as follows. Component of neuronal acetylcholine receptors (nAChRs) that function as pentameric, ligand-gated cation channels with high calcium permeability among other activities. nAChRs are excitatory neurotrasnmitter receptors formed by a collection of nAChR subunits known to mediate synaptic transmission in the nervous system and the neuromuscular junction. Each nAchR subunit confers differential attributes to channel properties, including activation, deactivation and desensitization kinetics, pH sensitivity, cation permeability, and binding to allosteric modulators. CHRNA4 forms heteropentameric neuronal acetylcholine receptors with CHRNB2 and CHRNB4, as well as CHRNA5 and CHRNB3 as accesory subunits. Is the most abundant nAChR subtype expressed in the central nervous system. Found in two major stoichiometric forms,(CHRNA4)3:(CHRNB2)2 and (CHRNA4)2:(CHRNB2)3, the two stoichiometric forms differ in their unitary conductance, calcium permeability, ACh sensitivity and potentiation by divalent cation. Involved in the modulation of calcium-dependent signaling pathways, influences the release of neurotransmitters, including dopamine, glutamate and GABA. This is Neuronal acetylcholine receptor subunit alpha-4 (Chrna4) from Rattus norvegicus (Rat).